The chain runs to 186 residues: Ribosome-recycling factor (186 aa).

The protein belongs to the RRF family.

It is found in the cytoplasm. Its function is as follows. Responsible for the release of ribosomes from messenger RNA at the termination of protein biosynthesis. May increase the efficiency of translation by recycling ribosomes from one round of translation to another. In Bartonella henselae (strain ATCC 49882 / DSM 28221 / CCUG 30454 / Houston 1) (Rochalimaea henselae), this protein is Ribosome-recycling factor.